The primary structure comprises 911 residues: SH3 and PX domain-containing protein 2B (911 aa).

The region spanning 5–129 (RSIVEVKVLD…QFFETRPEDL (125 aa)) is the PX domain. Y25 is subject to Phosphotyrosine. SH3 domains are found at residues 152–211 (MVLE…GQDG) and 221–280 (EEEE…KNSG). The interval 275 to 366 (LKKNSGEPLP…GLNLPKPPIP (92 aa)) is disordered. S279 and S291 each carry phosphoserine. Over residues 282–292 (PLPPKPGPGSP) the composition is skewed to pro residues. A compositionally biased stretch (basic and acidic residues) spans 311-337 (GREKELLSSQRDGRFEGRPVPDGDAKQ). Residues 338–347 (RSPKMRQRPP) are compositionally biased toward basic residues. The region spanning 368–427 (QVEEEYYTIAEFQTTIPDGISFQAGLKVEVIEKNLSGWWYIQIEDKEGWAPATFIDKYKK) is the SH3 3 domain. Positions 458–834 (NTGSEATGPS…GPWGTGKIGE (377 aa)) are disordered. Composition is skewed to basic and acidic residues over residues 486-499 (KDWK…RKAS), 517-548 (EEKP…RTEQ), 571-586 (PARD…DKSR), 598-609 (CGHKVLAKEVKK), and 618-628 (SKTDLPEEKPD). 2 positions are modified to phosphoserine: S499 and S528. Composition is skewed to pro residues over residues 643-653 (RPKPAPSPKTE) and 756-766 (VVPPRRPPPPK). The span at 822–831 (GSLGPWGTGK) shows a compositional bias: gly residues. Residue S843 is modified to Phosphoserine. The SH3 4 domain maps to 850 to 911 (LKDSLYVAVA…IPSNYLRKKP (62 aa)).

This sequence belongs to the SH3PXD2 family. As to quaternary structure, interacts with ADAM15. Interacts with NOXO1. Interacts (via SH3 domains) with NOXA1; the interaction is direct. Interacts with FASLG. In terms of processing, phosphorylated in SRC-transformed cells. In terms of tissue distribution, expressed in fibroblasts.

The protein resides in the cytoplasm. Its subcellular location is the cell projection. The protein localises to the podosome. Its function is as follows. Adapter protein involved in invadopodia and podosome formation and extracellular matrix degradation. Binds matrix metalloproteinases (ADAMs), NADPH oxidases (NOXs) and phosphoinositides. Acts as an organizer protein that allows NOX1- or NOX3-dependent reactive oxygen species (ROS) generation and ROS localization. Plays a role in mitotic clonal expansion during the immediate early stage of adipocyte differentiation. The polypeptide is SH3 and PX domain-containing protein 2B (SH3PXD2B) (Homo sapiens (Human)).